A 295-amino-acid chain; its full sequence is Tissue factor (295 aa).

Positions 1 to 32 (METPAWPRVPRPETAVARTLLLGWVFAQVAGA) are cleaved as a signal peptide. The Extracellular segment spans residues 33–251 (SGTTNTVAAY…MGQEKGEFRE (219 aa)). 2 consecutive short sequence motifs (WKS motif) follow at residues 46-48 (WKS) and 77-79 (WKS). A disulfide bond links C81 and C89. N-linked (GlcNAc...) asparagine glycans are attached at residues N156 and N169. The WKS motif signature appears at 190–192 (WKS). C218 and C241 are oxidised to a cystine. Residues 252-274 (IFYIIGAVVFVVIILVIILAISL) form a helical membrane-spanning segment. At 275 to 295 (HKCRKAGVGQSWKENSPLNVS) the chain is on the cytoplasmic side. The S-palmitoyl cysteine moiety is linked to residue C277.

This sequence belongs to the tissue factor family. In terms of assembly, interacts with HSPE; the interaction, inhibited by heparin, promotes the generation of activated factor X and activates coagulation in the presence of activated factor VII. Lung, placenta and pancreas.

The protein localises to the membrane. It localises to the secreted. Its function is as follows. Initiates blood coagulation by forming a complex with circulating factor VII or VIIa. The [TF:VIIa] complex activates factors IX or X by specific limited proteolysis. TF plays a role in normal hemostasis by initiating the cell-surface assembly and propagation of the coagulation protease cascade. The polypeptide is Tissue factor (F3) (Homo sapiens (Human)).